The primary structure comprises 571 residues: Proline--tRNA ligase (571 aa).

It belongs to the class-II aminoacyl-tRNA synthetase family. ProS type 1 subfamily. As to quaternary structure, homodimer.

The protein localises to the cytoplasm. The enzyme catalyses tRNA(Pro) + L-proline + ATP = L-prolyl-tRNA(Pro) + AMP + diphosphate. Functionally, catalyzes the attachment of proline to tRNA(Pro) in a two-step reaction: proline is first activated by ATP to form Pro-AMP and then transferred to the acceptor end of tRNA(Pro). As ProRS can inadvertently accommodate and process non-cognate amino acids such as alanine and cysteine, to avoid such errors it has two additional distinct editing activities against alanine. One activity is designated as 'pretransfer' editing and involves the tRNA(Pro)-independent hydrolysis of activated Ala-AMP. The other activity is designated 'posttransfer' editing and involves deacylation of mischarged Ala-tRNA(Pro). The misacylated Cys-tRNA(Pro) is not edited by ProRS. The polypeptide is Proline--tRNA ligase (Buchnera aphidicola subsp. Schizaphis graminum (strain Sg)).